Here is a 321-residue protein sequence, read N- to C-terminus: Pectinesterase (321 aa).

N-acetylthreonine is present on threonine 1. Asparagine 75 carries an N-linked (GlcNAc...) (complex) asparagine glycan. Substrate is bound by residues threonine 84 and glutamine 114. Aspartate 137 acts as the Proton donor in catalysis. A disulfide bridge links cysteine 151 with cysteine 171. The active-site Nucleophile is the aspartate 158. Substrate is bound by residues arginine 226 and tryptophan 228. Residues asparagine 275, asparagine 290, and asparagine 319 are each glycosylated (N-linked (GlcNAc...) (complex) asparagine).

Belongs to the pectinesterase family. In terms of processing, the N-glycans attached at Asn-75, Asn-275, Asn-290 and Asn-319 are complex oligosaccharides containing xylose, fucose, hexose and N-acetylglucosamine.

The catalysed reaction is [(1-&gt;4)-alpha-D-galacturonosyl methyl ester](n) + n H2O = [(1-&gt;4)-alpha-D-galacturonosyl](n) + n methanol + n H(+). Its pathway is glycan metabolism; pectin degradation; 2-dehydro-3-deoxy-D-gluconate from pectin: step 1/5. Its activity is regulated as follows. Inhibited by PMEI. In Actinidia deliciosa (Kiwi), this protein is Pectinesterase.